The sequence spans 55 residues: Trypsin inhibitor (55 aa).

A Kazal-like domain is found at 1 to 55 (AHMDCTEFNPLCRCNKMLGDLICAVIGDAKEEHRNMCALCCEHPGGFEYSNGPCE). Disulfide bonds link Cys-5-Cys-40, Cys-12-Cys-41, Cys-14-Cys-37, and Cys-23-Cys-54.

The protein resides in the secreted. In terms of biological role, potent inhibitor of trypsin. This is Trypsin inhibitor from Halocynthia roretzi (Sea squirt).